Consider the following 297-residue polypeptide: Probable GTP 3',8-cyclase (297 aa).

One can recognise a Radical SAM core domain in the interval 4-220 (EFGREIRSFR…VVTRKFMQNR (217 aa)). Arginine 13 provides a ligand contact to GTP. 2 residues coordinate [4Fe-4S] cluster: cysteine 20 and cysteine 24. S-adenosyl-L-methionine is bound at residue tyrosine 26. Residue cysteine 27 participates in [4Fe-4S] cluster binding. Position 61 (lysine 61) interacts with GTP. S-adenosyl-L-methionine is bound at residue glycine 65. A GTP-binding site is contributed by threonine 91. S-adenosyl-L-methionine is bound at residue serine 115. Lysine 151 contacts GTP. Residues cysteine 242 and cysteine 245 each coordinate [4Fe-4S] cluster. 247–249 (RIR) lines the GTP pocket. A [4Fe-4S] cluster-binding site is contributed by cysteine 259.

It belongs to the radical SAM superfamily. MoaA family. The cofactor is [4Fe-4S] cluster.

It catalyses the reaction GTP + AH2 + S-adenosyl-L-methionine = (8S)-3',8-cyclo-7,8-dihydroguanosine 5'-triphosphate + 5'-deoxyadenosine + L-methionine + A + H(+). It participates in cofactor biosynthesis; molybdopterin biosynthesis. Functionally, catalyzes the cyclization of GTP to (8S)-3',8-cyclo-7,8-dihydroguanosine 5'-triphosphate. This is Probable GTP 3',8-cyclase from Methanococcus vannielii (strain ATCC 35089 / DSM 1224 / JCM 13029 / OCM 148 / SB).